We begin with the raw amino-acid sequence, 145 residues long: Ribosomal protein uL24-like (145 aa).

Disordered regions lie at residues 1–21 (MKFN…HFNA) and 122–145 (KAKS…KMQE). Residues Lys-136 and Lys-142 each participate in a glycyl lysine isopeptide (Lys-Gly) (interchain with G-Cter in SUMO2) cross-link.

This sequence belongs to the universal ribosomal protein uL24 family.

The polypeptide is Ribosomal protein uL24-like (RPL26L1) (Homo sapiens (Human)).